Here is a 518-residue protein sequence, read N- to C-terminus: Protein translocase subunit SecD (518 aa).

The next 6 helical transmembrane spans lie at 9–29, 356–376, 377–397, 406–426, 451–473, and 486–506; these read IVLS…NFIQ, GKKA…LSYG, VIGL…LALL, LPGI…NVLI, AFAT…YIFG, and IGII…IDIW.

Belongs to the SecD/SecF family. SecD subfamily. As to quaternary structure, forms a complex with SecF. Part of the essential Sec protein translocation apparatus which comprises SecA, SecYEG and auxiliary proteins SecDF-YajC and YidC.

Its subcellular location is the cell inner membrane. Functionally, part of the Sec protein translocase complex. Interacts with the SecYEG preprotein conducting channel. SecDF uses the proton motive force (PMF) to complete protein translocation after the ATP-dependent function of SecA. This is Protein translocase subunit SecD from Rickettsia typhi (strain ATCC VR-144 / Wilmington).